Here is a 500-residue protein sequence, read N- to C-terminus: Betaine aldehyde dehydrogenase, chloroplastic (500 aa).

The N-terminal 7 residues, 1–7 (MSMPIPS), are a transit peptide targeting the chloroplast. Residue 238 to 243 (GSSATG) participates in NAD(+) binding. Catalysis depends on Glu-260, which acts as the Proton acceptor. Residue Cys-294 is the Nucleophile of the active site.

Belongs to the aldehyde dehydrogenase family. In terms of assembly, homodimer.

Its subcellular location is the plastid. The protein localises to the chloroplast. The enzyme catalyses betaine aldehyde + NAD(+) + H2O = glycine betaine + NADH + 2 H(+). It functions in the pathway amine and polyamine biosynthesis; betaine biosynthesis via choline pathway; betaine from betaine aldehyde: step 1/1. The chain is Betaine aldehyde dehydrogenase, chloroplastic from Beta vulgaris (Sugar beet).